A 319-amino-acid chain; its full sequence is Probable secreted beta-glucosidase C2G2.17c (319 aa).

A signal peptide spans 1 to 19; the sequence is MLFNNFLCFAVSAIPLVSA. N-linked (GlcNAc...) asparagine glycosylation is found at N36, N39, N45, N48, and N221.

The protein belongs to the SUN family.

Its subcellular location is the secreted. In terms of biological role, cell surface beta-glucosidase involved in cell wall biogenesis. In Schizosaccharomyces pombe (strain 972 / ATCC 24843) (Fission yeast), this protein is Probable secreted beta-glucosidase C2G2.17c.